A 133-amino-acid chain; its full sequence is Thioredoxin H2 (133 aa).

A disordered region spans residues 1-22 (MGGALSTVFGSGEDATAAGTES). In terms of domain architecture, Thioredoxin spans 6–133 (STVFGSGEDA…LEKKVSKLRA (128 aa)). Active-site nucleophile residues include cysteine 59 and cysteine 62. The cysteines at positions 59 and 62 are disulfide-linked.

This sequence belongs to the thioredoxin family. Plant H-type subfamily. Interacts with MDH1.

It is found in the cytoplasm. Its subcellular location is the mitochondrion. Thiol-disulfide oxidoreductase probably involved in the redox regulation of a number of cytosolic enzymes. Possesses insulin disulfide bonds reducing activity. The sequence is that of Thioredoxin H2 (TRX2) from Arabidopsis thaliana (Mouse-ear cress).